Here is a 108-residue protein sequence, read N- to C-terminus: uncharacterized protein (108 aa).

This is an uncharacterized protein from Autographa californica nuclear polyhedrosis virus (AcMNPV).